A 62-amino-acid chain; its full sequence is Small ribosomal subunit protein eS27 (62 aa).

Zn(2+)-binding residues include cysteine 17, cysteine 20, cysteine 36, and cysteine 39. The C4-type zinc-finger motif lies at 17-39 (CPDCENEQIIFEKASTVVDCVVC).

This sequence belongs to the eukaryotic ribosomal protein eS27 family. Part of the 30S ribosomal subunit. Requires Zn(2+) as cofactor.

The chain is Small ribosomal subunit protein eS27 from Methanosphaerula palustris (strain ATCC BAA-1556 / DSM 19958 / E1-9c).